An 87-amino-acid chain; its full sequence is MANIKSKQKRILTNEKSRQRNKSVRSAVRTEIRKFREAVAAGDKAAAEKQLRVASRALDKSVSKGVFHRNTAANKKSGMATAFNKMA.

A compositionally biased stretch (basic residues) spans 1-10; it reads MANIKSKQKR. Residues 1–27 are disordered; the sequence is MANIKSKQKRILTNEKSRQRNKSVRSA.

Belongs to the bacterial ribosomal protein bS20 family.

In terms of biological role, binds directly to 16S ribosomal RNA. The sequence is that of Small ribosomal subunit protein bS20 from Corynebacterium aurimucosum (strain ATCC 700975 / DSM 44827 / CIP 107346 / CN-1) (Corynebacterium nigricans).